The primary structure comprises 340 residues: Cytosolic Fe-S cluster assembly factor NBP35 (340 aa).

C31, C45, C48, and C54 together coordinate [4Fe-4S] cluster. 84–91 (GKGGVGKS) provides a ligand contact to ATP. [4Fe-4S] cluster-binding residues include C257 and C260.

The protein belongs to the Mrp/NBP35 ATP-binding proteins family. NUBP1/NBP35 subfamily. Heterotetramer of 2 NBP35 and 2 CFD1 chains. The cofactor is [4Fe-4S] cluster.

It localises to the cytoplasm. In terms of biological role, component of the cytosolic iron-sulfur (Fe/S) protein assembly (CIA) machinery. Required for maturation of extramitochondrial Fe-S proteins. The NBP35-CFD1 heterotetramer forms a Fe-S scaffold complex, mediating the de novo assembly of an Fe-S cluster and its transfer to target apoproteins. The polypeptide is Cytosolic Fe-S cluster assembly factor NBP35 (Phaeosphaeria nodorum (strain SN15 / ATCC MYA-4574 / FGSC 10173) (Glume blotch fungus)).